A 506-amino-acid chain; its full sequence is Kynurenine 3-monooxygenase (506 aa).

A disordered region spans residues 153 to 175; that stretch reads QETSLLPGEESEKDKKQNTEDED. A compositionally biased stretch (basic and acidic residues) spans 162 to 171; it reads ESEKDKKQNT.

This sequence belongs to the aromatic-ring hydroxylase family. KMO subfamily. Requires FAD as cofactor.

The protein resides in the mitochondrion outer membrane. It carries out the reaction L-kynurenine + NADPH + O2 + H(+) = 3-hydroxy-L-kynurenine + NADP(+) + H2O. The protein operates within cofactor biosynthesis; NAD(+) biosynthesis; quinolinate from L-kynurenine: step 1/3. Functionally, catalyzes the hydroxylation of L-kynurenine (L-Kyn) to form 3-hydroxy-L-kynurenine (L-3OHKyn). Required for synthesis of quinolinic acid. The polypeptide is Kynurenine 3-monooxygenase (Cryptococcus neoformans var. neoformans serotype D (strain B-3501A) (Filobasidiella neoformans)).